The primary structure comprises 452 residues: Translation initiation factor eIF2B subunit gamma (452 aa).

N-acetylmethionine is present on M1. Position 260 is a phosphoserine (S260).

The protein belongs to the eIF-2B gamma/epsilon subunits family. As to quaternary structure, component of the translation initiation factor 2B (eIF2B) complex which is a heterodecamer of two sets of five different subunits: alpha, beta, gamma, delta and epsilon. Subunits alpha, beta and delta comprise a regulatory subcomplex and subunits epsilon and gamma comprise a catalytic subcomplex. Within the complex, the hexameric regulatory complex resides at the center, with the two heterodimeric catalytic subcomplexes bound on opposite sides.

The protein localises to the cytoplasm. The protein resides in the cytosol. With respect to regulation, activated by the chemical integrated stress response (ISR) inhibitor ISRIB which stimulates guanine nucleotide exchange factor activity for both phosphorylated and unphosphorylated eIF2. In terms of biological role, acts as a component of the translation initiation factor 2B (eIF2B) complex, which catalyzes the exchange of GDP for GTP on the eukaryotic initiation factor 2 (eIF2) complex gamma subunit. Its guanine nucleotide exchange factor activity is repressed when bound to eIF2 complex phosphorylated on the alpha subunit, thereby limiting the amount of methionyl-initiator methionine tRNA available to the ribosome and consequently global translation is repressed. This is Translation initiation factor eIF2B subunit gamma (EIF2B3) from Homo sapiens (Human).